Consider the following 306-residue polypeptide: Acetyl-coenzyme A carboxylase carboxyl transferase subunit beta (306 aa).

Residues 25–294 enclose the CoA carboxyltransferase N-terminal domain; sequence LWIKDPTSGE…VVNPSNTSST (270 aa). Residues 287–296 show a composition bias toward low complexity; it reads NPSNTSSTNS. The segment at 287–306 is disordered; the sequence is NPSNTSSTNSQASLSKAEAA.

The protein belongs to the AccD/PCCB family. As to quaternary structure, acetyl-CoA carboxylase is a heterohexamer composed of biotin carboxyl carrier protein (AccB), biotin carboxylase (AccC) and two subunits each of ACCase subunit alpha (AccA) and ACCase subunit beta (AccD).

Its subcellular location is the cytoplasm. The enzyme catalyses N(6)-carboxybiotinyl-L-lysyl-[protein] + acetyl-CoA = N(6)-biotinyl-L-lysyl-[protein] + malonyl-CoA. It functions in the pathway lipid metabolism; malonyl-CoA biosynthesis; malonyl-CoA from acetyl-CoA: step 1/1. Component of the acetyl coenzyme A carboxylase (ACC) complex. Biotin carboxylase (BC) catalyzes the carboxylation of biotin on its carrier protein (BCCP) and then the CO(2) group is transferred by the transcarboxylase to acetyl-CoA to form malonyl-CoA. This chain is Acetyl-coenzyme A carboxylase carboxyl transferase subunit beta, found in Bartonella henselae (strain ATCC 49882 / DSM 28221 / CCUG 30454 / Houston 1) (Rochalimaea henselae).